A 312-amino-acid polypeptide reads, in one-letter code: Acetaldehyde dehydrogenase (312 aa).

Position 12–15 (12–15 (SGNV)) interacts with NAD(+). Cys132 functions as the Acyl-thioester intermediate in the catalytic mechanism. Residues 163-171 (SAGPGTRAN) and Asn290 each bind NAD(+).

It belongs to the acetaldehyde dehydrogenase family.

The enzyme catalyses acetaldehyde + NAD(+) + CoA = acetyl-CoA + NADH + H(+). In Pseudomonas putida (Arthrobacter siderocapsulatus), this protein is Acetaldehyde dehydrogenase (cbzQ).